The sequence spans 621 residues: Anthranilate synthase alpha subunit 2, chloroplastic (621 aa).

The transit peptide at 1 to 87 directs the protein to the chloroplast; sequence MSAVSISAVK…SEEQFTKFKK (87 aa).

The protein belongs to the anthranilate synthase component I family. Heterotetramer consisting of two non-identical subunits: a beta subunit and a large alpha subunit.

The protein localises to the plastid. Its subcellular location is the chloroplast. The enzyme catalyses chorismate + L-glutamine = anthranilate + pyruvate + L-glutamate + H(+). It functions in the pathway amino-acid biosynthesis; L-tryptophan biosynthesis; L-tryptophan from chorismate: step 1/5. With respect to regulation, feedback inhibition by tryptophan. Its function is as follows. Part of a heterotetrameric complex that catalyzes the two-step biosynthesis of anthranilate, an intermediate in the biosynthesis of L-tryptophan. In the first step, the glutamine-binding beta subunit of anthranilate synthase (AS) provides the glutamine amidotransferase activity which generates ammonia as a substrate that, along with chorismate, is used in the second step, catalyzed by the large alpha subunit of AS to produce anthranilate. In Arabidopsis thaliana (Mouse-ear cress), this protein is Anthranilate synthase alpha subunit 2, chloroplastic (ASA2).